The following is a 95-amino-acid chain: Aspartyl/glutamyl-tRNA(Asn/Gln) amidotransferase subunit C (95 aa).

This sequence belongs to the GatC family. Heterotrimer of A, B and C subunits.

The enzyme catalyses L-glutamyl-tRNA(Gln) + L-glutamine + ATP + H2O = L-glutaminyl-tRNA(Gln) + L-glutamate + ADP + phosphate + H(+). It carries out the reaction L-aspartyl-tRNA(Asn) + L-glutamine + ATP + H2O = L-asparaginyl-tRNA(Asn) + L-glutamate + ADP + phosphate + 2 H(+). Its function is as follows. Allows the formation of correctly charged Asn-tRNA(Asn) or Gln-tRNA(Gln) through the transamidation of misacylated Asp-tRNA(Asn) or Glu-tRNA(Gln) in organisms which lack either or both of asparaginyl-tRNA or glutaminyl-tRNA synthetases. The reaction takes place in the presence of glutamine and ATP through an activated phospho-Asp-tRNA(Asn) or phospho-Glu-tRNA(Gln). The chain is Aspartyl/glutamyl-tRNA(Asn/Gln) amidotransferase subunit C from Chlorobium phaeovibrioides (strain DSM 265 / 1930) (Prosthecochloris vibrioformis (strain DSM 265)).